The primary structure comprises 616 residues: Dihydroxy-acid dehydratase (616 aa).

Asp-81 lines the Mg(2+) pocket. Residue Cys-122 participates in [2Fe-2S] cluster binding. Mg(2+)-binding residues include Asp-123 and Lys-124. Lys-124 carries the N6-carboxylysine modification. Cys-195 provides a ligand contact to [2Fe-2S] cluster. Residue Glu-491 participates in Mg(2+) binding. Ser-517 serves as the catalytic Proton acceptor.

Belongs to the IlvD/Edd family. In terms of assembly, homodimer. [2Fe-2S] cluster serves as cofactor. Requires Mg(2+) as cofactor.

It catalyses the reaction (2R)-2,3-dihydroxy-3-methylbutanoate = 3-methyl-2-oxobutanoate + H2O. It carries out the reaction (2R,3R)-2,3-dihydroxy-3-methylpentanoate = (S)-3-methyl-2-oxopentanoate + H2O. It functions in the pathway amino-acid biosynthesis; L-isoleucine biosynthesis; L-isoleucine from 2-oxobutanoate: step 3/4. It participates in amino-acid biosynthesis; L-valine biosynthesis; L-valine from pyruvate: step 3/4. Functions in the biosynthesis of branched-chain amino acids. Catalyzes the dehydration of (2R,3R)-2,3-dihydroxy-3-methylpentanoate (2,3-dihydroxy-3-methylvalerate) into 2-oxo-3-methylpentanoate (2-oxo-3-methylvalerate) and of (2R)-2,3-dihydroxy-3-methylbutanoate (2,3-dihydroxyisovalerate) into 2-oxo-3-methylbutanoate (2-oxoisovalerate), the penultimate precursor to L-isoleucine and L-valine, respectively. This is Dihydroxy-acid dehydratase from Salmonella paratyphi C (strain RKS4594).